The following is a 158-amino-acid chain: Small ribosomal subunit protein uS15 (158 aa).

Residues 1–18 (MARMHARKRGKSGSKRPP) show a composition bias toward basic residues. The segment at 1–21 (MARMHARKRGKSGSKRPPRTA) is disordered.

It belongs to the universal ribosomal protein uS15 family. In terms of assembly, part of the 30S ribosomal subunit.

This is Small ribosomal subunit protein uS15 from Pyrococcus furiosus (strain ATCC 43587 / DSM 3638 / JCM 8422 / Vc1).